The primary structure comprises 487 residues: DNA ligase (487 aa).

K159 serves as the catalytic N6-AMP-lysine intermediate. The ATP site is built by R164, R182, and E217. E217 is an a divalent metal cation binding site. Positions 229–237 are interaction with the sliding clamp; that stretch reads EGLDFLFDA. E344 is an a divalent metal cation binding site. Positions 359 and 365 each coordinate ATP.

The protein belongs to the ATP-dependent DNA ligase family. In terms of assembly, interacts with the sliding clamp. The cofactor is a divalent metal cation.

The enzyme catalyses ATP + (deoxyribonucleotide)n-3'-hydroxyl + 5'-phospho-(deoxyribonucleotide)m = (deoxyribonucleotide)n+m + AMP + diphosphate.. In terms of biological role, DNA ligase, which is expressed in the early stage of lytic development, has been implicated in T4 DNA synthesis and genetic recombination. It may also play a role in T4 DNA repair. The polypeptide is DNA ligase (30) (Enterobacteria phage T4 (Bacteriophage T4)).